A 327-amino-acid polypeptide reads, in one-letter code: Undecaprenyl-phosphate 4-deoxy-4-formamido-L-arabinose transferase (327 aa).

2 helical membrane-spanning segments follow: residues 235-255 (LLSL…VLLV) and 270-290 (VFTL…GMGL).

The protein belongs to the glycosyltransferase 2 family.

It localises to the cell inner membrane. The catalysed reaction is UDP-4-deoxy-4-formamido-beta-L-arabinose + di-trans,octa-cis-undecaprenyl phosphate = 4-deoxy-4-formamido-alpha-L-arabinopyranosyl di-trans,octa-cis-undecaprenyl phosphate + UDP. Its pathway is glycolipid biosynthesis; 4-amino-4-deoxy-alpha-L-arabinose undecaprenyl phosphate biosynthesis; 4-amino-4-deoxy-alpha-L-arabinose undecaprenyl phosphate from UDP-4-deoxy-4-formamido-beta-L-arabinose and undecaprenyl phosphate: step 1/2. It participates in bacterial outer membrane biogenesis; lipopolysaccharide biosynthesis. Catalyzes the transfer of 4-deoxy-4-formamido-L-arabinose from UDP to undecaprenyl phosphate. The modified arabinose is attached to lipid A and is required for resistance to polymyxin and cationic antimicrobial peptides. The sequence is that of Undecaprenyl-phosphate 4-deoxy-4-formamido-L-arabinose transferase from Yersinia pestis bv. Antiqua (strain Antiqua).